Consider the following 328-residue polypeptide: Methionyl-tRNA formyltransferase (328 aa).

Position 110-113 (110-113 (SLLP)) interacts with (6S)-5,6,7,8-tetrahydrofolate.

This sequence belongs to the Fmt family.

It catalyses the reaction L-methionyl-tRNA(fMet) + (6R)-10-formyltetrahydrofolate = N-formyl-L-methionyl-tRNA(fMet) + (6S)-5,6,7,8-tetrahydrofolate + H(+). Functionally, attaches a formyl group to the free amino group of methionyl-tRNA(fMet). The formyl group appears to play a dual role in the initiator identity of N-formylmethionyl-tRNA by promoting its recognition by IF2 and preventing the misappropriation of this tRNA by the elongation apparatus. This chain is Methionyl-tRNA formyltransferase, found in Prochlorococcus marinus (strain MIT 9215).